A 123-amino-acid chain; its full sequence is Ribosome-binding factor A (123 aa).

This sequence belongs to the RbfA family. In terms of assembly, monomer. Binds 30S ribosomal subunits, but not 50S ribosomal subunits or 70S ribosomes.

It is found in the cytoplasm. In terms of biological role, one of several proteins that assist in the late maturation steps of the functional core of the 30S ribosomal subunit. Associates with free 30S ribosomal subunits (but not with 30S subunits that are part of 70S ribosomes or polysomes). Required for efficient processing of 16S rRNA. May interact with the 5'-terminal helix region of 16S rRNA. The protein is Ribosome-binding factor A of Cupriavidus taiwanensis (strain DSM 17343 / BCRC 17206 / CCUG 44338 / CIP 107171 / LMG 19424 / R1) (Ralstonia taiwanensis (strain LMG 19424)).